A 299-amino-acid polypeptide reads, in one-letter code: NAD kinase (299 aa).

The active-site Proton acceptor is the Asp-71. Residues 71-72 (DG), 145-146 (ND), Arg-173, Asp-175, 186-191 (TAYSLS), Ala-210, and Gln-248 contribute to the NAD(+) site.

The protein belongs to the NAD kinase family. Requires a divalent metal cation as cofactor.

It is found in the cytoplasm. The catalysed reaction is NAD(+) + ATP = ADP + NADP(+) + H(+). Involved in the regulation of the intracellular balance of NAD and NADP, and is a key enzyme in the biosynthesis of NADP. Catalyzes specifically the phosphorylation on 2'-hydroxyl of the adenosine moiety of NAD to yield NADP. In Bordetella bronchiseptica (strain ATCC BAA-588 / NCTC 13252 / RB50) (Alcaligenes bronchisepticus), this protein is NAD kinase.